We begin with the raw amino-acid sequence, 550 residues long: Arginine--tRNA ligase (550 aa).

Positions 130–140 match the 'HIGH' region motif; sequence ANPTGPIHLGG.

It belongs to the class-I aminoacyl-tRNA synthetase family. As to quaternary structure, monomer.

It localises to the cytoplasm. The catalysed reaction is tRNA(Arg) + L-arginine + ATP = L-arginyl-tRNA(Arg) + AMP + diphosphate. This Corynebacterium diphtheriae (strain ATCC 700971 / NCTC 13129 / Biotype gravis) protein is Arginine--tRNA ligase.